Here is a 108-residue protein sequence, read N- to C-terminus: Bublin coiled-coil protein (108 aa).

Disordered regions lie at residues 1 to 23 (MSGPNGDPNISVEDGLINDDDDF) and 67 to 108 (RLEF…DEGS). A coiled-coil region spans residues 25–73 (SEEYEAINSMLDQINSYLDDLEERNDSLNGKLHELMESNRQARLEFRAQ). Over residues 99–108 (ENDKKIDEGS) the composition is skewed to basic and acidic residues.

It belongs to the UPF0184 (EST00098) family.

It localises to the cell junction. Its subcellular location is the cytoplasm. The protein localises to the cytoskeleton. Essential for intermediate filament organization in intestinal cells, interacts with intermediate filament and regulates intestinal lumen morphology. In Takifugu rubripes (Japanese pufferfish), this protein is Bublin coiled-coil protein (bbln).